The following is an 804-amino-acid chain: Leucine--tRNA ligase (804 aa).

The 'HIGH' region signature appears at 40 to 51 (PYPSGAGLHVGH). Positions 576 to 580 (KMSKS) match the 'KMSKS' region motif. An ATP-binding site is contributed by Lys579.

The protein belongs to the class-I aminoacyl-tRNA synthetase family.

Its subcellular location is the cytoplasm. The enzyme catalyses tRNA(Leu) + L-leucine + ATP = L-leucyl-tRNA(Leu) + AMP + diphosphate. The polypeptide is Leucine--tRNA ligase (Staphylococcus saprophyticus subsp. saprophyticus (strain ATCC 15305 / DSM 20229 / NCIMB 8711 / NCTC 7292 / S-41)).